A 92-amino-acid polypeptide reads, in one-letter code: Bombyxin A-7 (92 aa).

Residues 1 to 19 (MKLLLAIALMLTIVMWVST) form the signal peptide. Glutamine 20 is modified (pyrrolidone carboxylic acid). Intrachain disulfides connect cysteine 29–cysteine 79, cysteine 41–cysteine 92, and cysteine 78–cysteine 83. A propeptide spans 50 to 70 (SDAQYASYGSAWLMPYSEGRG) (c peptide like).

The protein belongs to the insulin family. In terms of assembly, heterodimer of a B chain and an A chain linked by two disulfide bonds.

It localises to the secreted. Functionally, brain peptide responsible for activation of prothoracic glands to produce ecdysone in insects. This chain is Bombyxin A-7 (BBXA7), found in Bombyx mori (Silk moth).